The chain runs to 223 residues: MKNLEEFERNLGYKFKKSELLEEALTHKSTKQALNNERLEFLGDAVMDLLVAEYLFKKFSKIAEGDMSKLRAALVNEKSFANMARRLKMGEFLRLSQAEENNGGREKDSILSDAFEAVMGAIYLEAGLLKVREISISLLELCYPQIDFAHLEKDYKTALQEVTQATLGVIPTYELIGSFGPDHKKEFEIALLLNGKEISRAVGSSKKQAQQLAAKIALEKIKK.

Positions 4–127 (LEEFERNLGY…VMGAIYLEAG (124 aa)) constitute an RNase III domain. Glutamate 40 contacts Mg(2+). The active site involves aspartate 44. Residues aspartate 113 and glutamate 116 each coordinate Mg(2+). Residue glutamate 116 is part of the active site. The region spanning 154–223 (DYKTALQEVT…AKIALEKIKK (70 aa)) is the DRBM domain.

It belongs to the ribonuclease III family. Homodimer. Requires Mg(2+) as cofactor.

It is found in the cytoplasm. It carries out the reaction Endonucleolytic cleavage to 5'-phosphomonoester.. Digests double-stranded RNA. Involved in the processing of primary rRNA transcript to yield the immediate precursors to the large and small rRNAs (23S and 16S). Processes some mRNAs, and tRNAs when they are encoded in the rRNA operon. Processes pre-crRNA and tracrRNA of type II CRISPR loci if present in the organism. The sequence is that of Ribonuclease 3 from Campylobacter concisus (strain 13826).